The chain runs to 375 residues: uncharacterized protein (375 aa).

A signal peptide spans 1 to 20; it reads MKNKLFIILIIFIILKIVIC. Residues 21–335 lie on the Extracellular side of the membrane; the sequence is QNTTPSKLIP…EKQVERKITP (315 aa). The segment covering 30–42 has biased composition (low complexity); it reads PQQQQKQKQQQTQ. 2 disordered regions span residues 30–74 and 113–253; these read PQQQ…QPQQ and SQNV…PHNH. Basic residues predominate over residues 43–53; it reads PHHHHHHHQQH. The segment covering 54–74 has biased composition (low complexity); the sequence is QQHQQQHQPNQQIKQQQQPQQ. The segment covering 120 to 151 has biased composition (basic residues); that stretch reads PPHHTQQRVPHHHGPNGAPHHHGPNGAPHHHG. Over residues 168 to 180 the composition is skewed to polar residues; sequence GHNTQGHVQTNHV. A compositionally biased stretch (low complexity) spans 181–220; that stretch reads NNINKNNINNNNNNNNNNNNNNNNNNNNNINDNKNIRNNI. Residues 336–356 traverse the membrane as a helical segment; that stretch reads IMVLYILLASTMVIQLFIMVF. Residues 357–375 lie on the Cytoplasmic side of the membrane; the sequence is KQVKHIREINAKTTMESLL.

Its subcellular location is the membrane. This is an uncharacterized protein from Dictyostelium discoideum (Social amoeba).